A 1970-amino-acid chain; its full sequence is DNA-directed RNA polymerase II subunit RPB1 (1970 aa).

Position 1 is an N-acetylmethionine (Met-1). Ser-27 is subject to Phosphoserine. Residue Arg-67 participates in RNA binding. Zn(2+)-binding residues include Cys-71, Cys-74, Cys-81, His-84, Cys-111, Cys-114, Cys-154, and Cys-184. Ser-217 bears the Phosphoserine mark. DNA contacts are provided by Lys-346 and Arg-358. Position 460 (Arg-460) interacts with RNA. Mg(2+) contacts are provided by Asn-493, Asp-495, Asp-497, and Asp-499. Position 499 (Asp-499) interacts with RNA. Residues 832–873 form a bridging helix region; that stretch reads TPTEFFFHAMGGREGLIDTAVKTAETGYIQRRLIKSMESVMV. Residues 1083 to 1124 form a trigger loop region; the sequence is PGEMVGALAAQSLGEPATQMTLNTFHYAGVSAKNVTLGVPRL. Residue Lys-1268 forms a Glycyl lysine isopeptide (Lys-Gly) (interchain with G-Cter in ubiquitin); by NEDD4 linkage. DNA contacts are provided by Arg-1416 and Arg-1421. A compositionally biased stretch (low complexity) spans 1546-1568; that stretch reads FSPSAASDASGFSPGYSPAWSPT. The disordered stretch occupies residues 1546-1970; sequence FSPSAASDAS…ISPDDSDDEN (425 aa). Residues 1569–1583 show a composition bias toward pro residues; it reads PGSPGSPGPSSPYIP. Repeat unit 1 spans residues 1593 to 1599; sequence YSPTSPA. Residues 1593-1960 form a C-terminal domain (CTD); 52 X 7 AA approximate tandem repeats of Y-[ST]-P-[STQ]-[ST]-P-[SRTEVKGN] region; sequence YSPTSPAYEP…SPTYSLTSPA (368 aa). The 2; approximate repeat unit spans residues 1600-1606; it reads YEPRSPG. The residue at position 1603 (Arg-1603) is an Omega-N-methylated arginine. Repeat copies occupy residues 1608–1614, 1615–1621, 1622–1628, 1629–1635, 1636–1642, 1643–1649, 1650–1656, 1657–1663, 1664–1670, 1671–1677, 1678–1684, 1685–1691, 1692–1698, 1699–1705, 1706–1712, 1713–1719, 1720–1726, 1727–1733, 1734–1740, 1741–1747, 1748–1754, 1755–1761, 1762–1768, 1769–1775, 1776–1782, 1783–1789, 1790–1796, 1797–1803, 1804–1810, 1811–1817, 1818–1824, 1825–1831, 1832–1838, 1839–1845, 1846–1852, 1853–1859, 1860–1866, 1867–1873, 1874–1880, 1881–1887, 1888–1894, 1895–1901, 1902–1908, 1909–1915, 1916–1922, 1923–1929, 1930–1936, and 1940–1946. A compositionally biased stretch (low complexity) spans 1608–1959; the sequence is YTPQSPSYSP…TSPTYSLTSP (352 aa). Position 1810 is an asymmetric dimethylarginine; alternate (Arg-1810). A Symmetric dimethylarginine; alternate modification is found at Arg-1810. Residue Lys-1838 is modified to N6,N6-dimethyllysine; alternate. The residue at position 1838 (Lys-1838) is an N6-methyllysine; alternate. A Phosphothreonine modification is found at Thr-1840. Phosphoserine is present on residues Ser-1843, Ser-1845, Ser-1847, Ser-1849, and Ser-1850. Thr-1854 bears the Phosphothreonine mark. Ser-1857 is subject to Phosphoserine. Position 1859 is an N6,N6-dimethyllysine; alternate (Lys-1859). N6-methyllysine; alternate is present on Lys-1859. Tyr-1860 carries the phosphotyrosine modification. Phosphoserine is present on Ser-1861. Residue Thr-1863 is modified to Phosphothreonine. Ser-1864 is subject to Phosphoserine. Position 1866 is an N6,N6-dimethyllysine; alternate (Lys-1866). An N6-methyllysine; alternate modification is found at Lys-1866. The residue at position 1866 (Lys-1866) is an N6,N6,N6-trimethyllysine; alternate. Residue Lys-1866 is modified to N6-acetyllysine; alternate. Residue Tyr-1867 is modified to Phosphotyrosine. Ser-1868 bears the Phosphoserine mark. The residue at position 1870 (Thr-1870) is a Phosphothreonine. An N6,N6-dimethyllysine; alternate modification is found at Lys-1873. Residue Lys-1873 is modified to N6-methyllysine; alternate. Lys-1873 carries the post-translational modification N6,N6,N6-trimethyllysine; alternate. Residue Tyr-1874 is modified to Phosphotyrosine. Position 1875 is a phosphoserine (Ser-1875). Thr-1877 is modified (phosphothreonine). Phosphoserine is present on Ser-1878. Tyr-1881 is modified (phosphotyrosine). Ser-1882 bears the Phosphoserine mark. Position 1885 is a phosphothreonine (Thr-1885). Residue Lys-1887 is modified to N6,N6-dimethyllysine; alternate. Lys-1887 carries the post-translational modification N6-methyllysine; alternate. Lys-1887 is subject to N6-acetyllysine; alternate. Thr-1894 is subject to Phosphothreonine. Phosphoserine occurs at positions 1896, 1899, and 1906. An N6,N6-dimethyllysine modification is found at Lys-1908. Tyr-1909 carries the post-translational modification Phosphotyrosine. Position 1912 is a phosphothreonine (Thr-1912). Phosphoserine is present on Ser-1913. Thr-1915 carries the phosphothreonine modification. Phosphotyrosine is present on Tyr-1916. Ser-1917 bears the Phosphoserine mark. Thr-1919 carries the post-translational modification Phosphothreonine. Residue Ser-1920 is modified to Phosphoserine. N6,N6-dimethyllysine; alternate is present on Lys-1922. Lys-1922 is subject to N6-methyllysine; alternate. Lys-1922 is subject to N6-acetyllysine; alternate. Phosphotyrosine is present on Tyr-1923. Thr-1926 is subject to Phosphothreonine. Phosphoserine is present on Ser-1927. Residue Thr-1929 is modified to Phosphothreonine. The residue at position 1930 (Tyr-1930) is a Phosphotyrosine. Ser-1931 is modified (phosphoserine). Thr-1933 carries the phosphothreonine modification. Ser-1934 bears the Phosphoserine mark. Lys-1936 is subject to N6,N6-dimethyllysine; alternate. N6-methyllysine; alternate is present on Lys-1936. N6-acetyllysine; alternate is present on Lys-1936. The 51; approximate repeat unit spans residues 1947-1953; it reads YSPTSPT. One copy of the 52; approximate repeat lies at 1954 to 1960; the sequence is YSLTSPA.

The protein belongs to the RNA polymerase beta' chain family. In terms of assembly, component of the RNA polymerase II (Pol II) core complex consisting of 12 subunits: a ten-subunit catalytic core composed of POLR2A/RPB1, POLR2B/RPB2, POLR2C/RPB3, POLR2I/RPB9, POLR2J/RPB11, POLR2E/RPABC1, POLR2F/RPABC2, POLR2H/RPABC3, POLR2K/RPABC4 and POLR2L/RPABC5 and a mobile stalk composed of two subunits POLR2D/RPB4 and POLR2G/RPB7, protruding from the core and functioning primarily in transcription initiation. Part of Pol II(G) complex, in which Pol II core associates with an additional subunit POLR2M; unlike conventional Pol II, Pol II(G) functions as a transcriptional repressor. Part of Pol II pre-initiation complex (PIC), in which Pol II core assembles with Mediator, general transcription factors and other specific initiation factors including GTF2E1, GTF2E2, GTF2F1, GTF2F2, TCEA1, ERCC2, ERCC3, GTF2H2, GTF2H3, GTF2H4, GTF2H5, GTF2A1, GTF2A2, GTF2B and TBP; this large multi-subunit PIC complex mediates DNA unwinding and targets Pol II core to the transcription start site where the first phosphodiester bond forms. Component of a complex which is at least composed of HTATSF1/Tat-SF1, the P-TEFb complex components CDK9 and CCNT1, Pol II, SUPT5H, and NCL/nucleolin. The large PER complex involved in the repression of transcriptional termination is composed of at least PER2, CDK9, DDX5, DHX9, NCBP1 and POLR2A (active). Interacts (via the C-terminal domain (CTD)) with U2AF2; recruits PRPF19 and the Prp19 complex to the pre-mRNA and may couple transcription to pre-mRNA splicing. Interacts (via the C-terminal domain (CTD)) with SMN1/SMN2; recruits SMN1/SMN2 to RNA Pol II elongation complexes. Interacts via the phosphorylated C-terminal domain with WDR82 and with SETD1A and SETD1B only in the presence of WDR82. When phosphorylated at 'Ser-5', interacts with MEN1; the unphosphorylated form, or phosphorylated at 'Ser-2' does not interact. When phosphorylated at 'Ser-5', interacts with ZMYND8; the form phosphorylated at 'Ser-2' does not interact. When phosphorylated at 'Ser-2', interacts with SUPT6H (via SH2 domain). Interacts with RECQL5 and TCEA1; binding of RECQL5 prevents TCEA1 binding. The phosphorylated C-terminal domain interacts with FNBP3. The phosphorylated C-terminal domain interacts with SYNCRIP. Interacts with ATF7IP. Interacts with DDX5. Interacts with WWP2. Interacts with SETX. Interacts (phosphorylated) with PIH1D1. Interacts (via the C-terminal domain (CTD)) with TDRD3. Interacts with PRMT5. Interacts with XRN2. Interacts with SAFB/SAFB1. Interacts with CCNL1. Interacts with CCNL2. Interacts with MYO1C. Interacts with PAF1. Interacts with SFRS19. Interacts (via C-terminus) with CMTR1. Interacts (via C-terminus) with CTDSP1. Interacts (via C-terminus) with SCAF8. Interacts (via the C-terminal domain (CTD)) with CCNT2. Interacts with FUS. Interacts with MCM3AP isoform GANP. Interacts with kinase SRPK2; the interaction occurs during the co-transcriptional formation of inappropriate R-loops. Interacts with SETD2. Interacts with UVSSA. Interacts with ERCC6. Interacts with the TFIIH complex. Requires Mg(2+) as cofactor. In terms of processing, the tandem heptapeptide repeats in the C-terminal domain (CTD) can be highly phosphorylated. The phosphorylation activates Pol II. Phosphorylation occurs mainly at residues 'Ser-2' and 'Ser-5' of the heptapeptide repeat and is mediated, at least, by CDK7 and CDK9. POLR2A associated with DNA is specifically phosphorylated at 'Ser-5' of the CTD by CDK7, promoting transcription initiation by triggering dissociation from DNA. Phosphorylated at 'Ser-2', Ser-5' and 'Ser-7' of the CTD by CDK9 (P-TEFb complex), promoting transcription elongation. Phosphorylation also takes place at 'Ser-7' of the heptapeptide repeat, which is required for efficient transcription of snRNA genes and processing of the transcripts. The phosphorylation state is believed to result from the balanced action of site-specific CTD kinases and phosphatases, and a 'CTD code' that specifies the position of Pol II within the transcription cycle has been proposed. Dephosphorylated by the INTAC complex when transcripts are unfavorably configured for transcriptional elongation, leading to premature transcription termination: dephosphorylation is mediated by the PPP2CA component of the INTAC complex. In response to replication stress, dephosphorylated at 'Ser-5' of the CTD by the PNUTS-PP1 complex, promoting RNA polymerase II degradation. Dephosphorylated by the protein phosphatase CTDSP1. Dephosphorylated at 'Ser-2' following UV irradiation. Post-translationally, among tandem heptapeptide repeats of the C-terminal domain (CTD) some do not match the Y-S-P-T-S-P-S consensus, the seventh serine residue 'Ser-7' being replaced by a lysine. 'Lys-7' in these non-consensus heptapeptide repeats can be alternatively acetylated, methylated and dimethylated. EP300 is one of the enzyme able to acetylate 'Lys-7'. Acetylation at 'Lys-7' of non-consensus heptapeptide repeats is associated with 'Ser-2' phosphorylation and active transcription. Regulates initiation or early elongation steps of transcription specially for inducible genes. Methylated at Arg-1810 prior to transcription initiation when the CTD is hypophosphorylated, phosphorylation at Ser-1805 and Ser-1808 preventing this methylation. Symmetrically or asymmetrically dimethylated at Arg-1810 by PRMT5 and CARM1 respectively. Symmetric or asymmetric dimethylation modulates interactions with CTD-binding proteins like SMN1/SMN2 and TDRD3. SMN1/SMN2 interacts preferentially with the symmetrically dimethylated form while TDRD3 interacts with the asymmetric form. Through the recruitment of SMN1/SMN2, symmetric dimethylation is required for resolving RNA-DNA hybrids created by RNA polymerase II, that form R-loop in transcription terminal regions, an important step in proper transcription termination. CTD dimethylation may also facilitate the expression of select RNAs. Among tandem heptapeptide repeats of the C-terminal domain (CTD) some do not match the Y-S-P-T-S-P-S consensus, the seventh serine residue 'Ser-7' being replaced by a lysine. 'Lys-7' in these non-consensus heptapeptide repeats can be alternatively acetylated, methylated, dimethylated and trimethylated. Methylation occurs in the earliest transcription stages and precedes or is concomitant to 'Ser-5' and 'Ser-7' phosphorylation. Dimethylation and trimehtylation at 'Lys-7' of non-consensus heptapeptide repeats are exclusively associated with phosphorylated CTD. In terms of processing, following transcription stress, the elongating form of RNA polymerase II (RNA pol IIo) is ubiquitinated by the DCX(ERCC8) complex (also named CSA complex) on Lys-1268 at DNA damage sites without leading to degradation: ubiquitination promotes RNA pol IIo backtracking to allow access by the transcription-coupled nucleotide excision repair (TC-NER) machinery. At stalled RNA pol II where TC-NER has failed, RBX1-mediated polybiquitination at Lys-1268 may lead to proteasome-mediated degradation in a UBAP2- and UBAP2L-dependent manner; presumably to halt global transcription and enable 'last resort' DNA repair pathways. Ubiquitinated by the BCR(ARMC5) complex when transcripts are unfavorably configured for transcriptional elongation: the BCR(ARMC5) complex specifically catalyzes ubiquitination of POLR2A phosphorylated at 'Ser-5' of the C-terminal domain (CTD), leading to POLR2A degradation. Ubiquitination by the BCR(ARMC5) complex takes place at residues distinct from Lys-1268. Ubiquitinated by WWP2 leading to proteasomal degradation.

It localises to the nucleus. It is found in the cytoplasm. Its subcellular location is the chromosome. The enzyme catalyses RNA(n) + a ribonucleoside 5'-triphosphate = RNA(n+1) + diphosphate. It carries out the reaction a 3'-end ribonucleotidyl-ribonucleotide-RNA + H2O = a 3'-end ribonucleotide-RNA + a ribonucleoside 5'-phosphate + H(+). Functionally, catalytic core component of RNA polymerase II (Pol II), a DNA-dependent RNA polymerase which synthesizes mRNA precursors and many functional non-coding RNAs using the four ribonucleoside triphosphates as substrates. Pol II-mediated transcription cycle proceeds through transcription initiation, transcription elongation and transcription termination stages. During transcription initiation, Pol II pre-initiation complex (PIC) is recruited to DNA promoters, with focused-type promoters containing either the initiator (Inr) element, or the TATA-box found in cell-type specific genes and dispersed-type promoters that often contain hypomethylated CpG islands usually found in housekeeping genes. Once the polymerase has escaped from the promoter it enters the elongation phase during which RNA is actively polymerized, based on complementarity with the template DNA strand. Transcription termination involves the release of the RNA transcript and polymerase from the DNA. Forms Pol II active center together with the second largest subunit POLR2B/RPB2. Appends one nucleotide at a time to the 3' end of the nascent RNA, with POLR2A/RPB1 most likely contributing a Mg(2+)-coordinating DxDGD motif, and POLR2B/RPB2 participating in the coordination of a second Mg(2+) ion and providing lysine residues believed to facilitate Watson-Crick base pairing between the incoming nucleotide and template base. Typically, Mg(2+) ions direct a 5' nucleoside triphosphate to form a phosphodiester bond with the 3' hydroxyl of the preceding nucleotide of the nascent RNA, with the elimination of pyrophosphate. The reversible pyrophosphorolysis can occur at high pyrophosphate concentrations. Can proofread the nascent RNA transcript by means of a 3' -&gt; 5' exonuclease activity. If a ribonucleotide is mis-incorporated, backtracks along the template DNA and cleaves the phosphodiester bond releasing the mis-incorporated 5'-ribonucleotide. Through its unique C-terminal domain (CTD, 52 heptapeptide tandem repeats) serves as a platform for assembly of factors that regulate transcription initiation, elongation and termination. CTD phosphorylation on Ser-5 mediates Pol II promoter escape, whereas phosphorylation on Ser-2 is required for Pol II pause release during transcription elongation and further pre-mRNA processing. Additionally, the regulation of gene expression levels depends on the balance between methylation and acetylation levels of the CTD-lysines. Initiation or early elongation steps of transcription of growth-factor-induced immediate early genes are regulated by the acetylation status of the CTD. Methylation and dimethylation have a repressive effect on target genes expression. Cooperates with mRNA splicing machinery in co-transcriptional 5'-end capping and co-transcriptional splicing of pre-mRNA. In terms of biological role, RNA-dependent RNA polymerase that catalyzes the extension of a non-coding RNA (ncRNA) at the 3'-end using the four ribonucleoside triphosphates as substrates. An internal ncRNA sequence near the 3'-end serves as a template in a single-round Pol II-mediated RNA polymerization reaction. May decrease the stability of ncRNAs that repress Pol II-mediated gene transcription. This chain is DNA-directed RNA polymerase II subunit RPB1 (POLR2A), found in Bos taurus (Bovine).